Reading from the N-terminus, the 142-residue chain is COA8 family protein Y39B6A.34, mitochondrial (142 aa).

This sequence belongs to the COA8 family.

It is found in the mitochondrion inner membrane. Functionally, may be required for cytochrome c complex (COX) assembly and function, COX being the terminal component of the mitochondrial respiratory chain. This Caenorhabditis elegans protein is COA8 family protein Y39B6A.34, mitochondrial.